A 210-amino-acid polypeptide reads, in one-letter code: Somatotropin-2 (210 aa).

Residues 1–22 (MARALVLLSVVLVSLLVNQGRA) form the signal peptide. Histidine 38 contributes to the Zn(2+) binding site. Cysteine 71 and cysteine 183 are joined by a disulfide. Residue glutamate 192 participates in Zn(2+) binding. Residues cysteine 200 and cysteine 208 are joined by a disulfide bond.

This sequence belongs to the somatotropin/prolactin family.

The protein resides in the secreted. Its function is as follows. Growth hormone plays an important role in growth control and is involved in the regulation of several anabolic processes. Implicated as an osmoregulatory substance important for seawater adaptation. This Carassius auratus (Goldfish) protein is Somatotropin-2 (gh2).